The following is a 289-amino-acid chain: Probable porphobilinogen deaminase (289 aa).

C233 is modified (S-(dipyrrolylmethanemethyl)cysteine).

It belongs to the HMBS family. The cofactor is dipyrromethane.

It catalyses the reaction 4 porphobilinogen + H2O = hydroxymethylbilane + 4 NH4(+). It participates in porphyrin-containing compound metabolism; protoporphyrin-IX biosynthesis; coproporphyrinogen-III from 5-aminolevulinate: step 2/4. Tetrapolymerization of the monopyrrole PBG into the hydroxymethylbilane pre-uroporphyrinogen in several discrete steps. This Methanothermobacter thermautotrophicus (strain ATCC 29096 / DSM 1053 / JCM 10044 / NBRC 100330 / Delta H) (Methanobacterium thermoautotrophicum) protein is Probable porphobilinogen deaminase (hemC).